A 66-amino-acid polypeptide reads, in one-letter code: Dermaseptin PD-3-7 (66 aa).

A signal peptide spans 1 to 22 (MSFMKKSLLLVLFLGVVSLSNC). A propeptide spanning residues 23 to 40 (EEEKGENENEDHEEHHEE) is cleaved from the precursor.

In terms of tissue distribution, expressed by the skin glands.

The protein resides in the secreted. In terms of biological role, possesses a potent antimicrobial activity against Gram-positive and Gram-negative bacteria. Probably acts by disturbing membrane functions with its amphipathic structure. The sequence is that of Dermaseptin PD-3-7 from Agalychnis dacnicolor (Giant Mexican leaf frog).